The following is a 343-amino-acid chain: DNA-directed RNA polymerase subunit alpha (343 aa).

Residues 1–236 (MQEHYYKFWR…EQLQIFLTFD (236 aa)) are alpha N-terminal domain (alpha-NTD). An alpha C-terminal domain (alpha-CTD) region spans residues 253–343 (LNENLFRSVD…QPPQKRETQQ (91 aa)).

This sequence belongs to the RNA polymerase alpha chain family. In terms of assembly, homodimer. The RNAP catalytic core consists of 2 alpha, 1 beta, 1 beta' and 1 omega subunit. When a sigma factor is associated with the core the holoenzyme is formed, which can initiate transcription.

It carries out the reaction RNA(n) + a ribonucleoside 5'-triphosphate = RNA(n+1) + diphosphate. Functionally, DNA-dependent RNA polymerase catalyzes the transcription of DNA into RNA using the four ribonucleoside triphosphates as substrates. The polypeptide is DNA-directed RNA polymerase subunit alpha (Bdellovibrio bacteriovorus (strain ATCC 15356 / DSM 50701 / NCIMB 9529 / HD100)).